The sequence spans 66 residues: Protein translocase subunit SecE (66 aa).

The helical transmembrane segment at 34-54 (LVVIVAVFVFSLICLVLDYGI) threads the bilayer.

This sequence belongs to the SecE/SEC61-gamma family. In terms of assembly, component of the Sec protein translocase complex. Heterotrimer consisting of SecY, SecE and SecG subunits. The heterotrimers can form oligomers, although 1 heterotrimer is thought to be able to translocate proteins. Interacts with the ribosome. Interacts with SecDF, and other proteins may be involved. Interacts with SecA.

It localises to the cell inner membrane. Essential subunit of the Sec protein translocation channel SecYEG. Clamps together the 2 halves of SecY. May contact the channel plug during translocation. This chain is Protein translocase subunit SecE, found in Rickettsia bellii (strain RML369-C).